Consider the following 378-residue polypeptide: Sphingosine 1-phosphate receptor 3 (378 aa).

Residues 1–40 are Extracellular-facing; it reads MATALPPRLQPVRGNETLREHYQYVGKLAGRLKEASEGST. An N-linked (GlcNAc...) asparagine glycan is attached at N15. Residues 41–65 traverse the membrane as a helical segment; sequence LTTVLFLVICSFIVLENLMVLIAIW. The Cytoplasmic segment spans residues 66 to 72; sequence KNNKFHN. The helical transmembrane segment at 73–101 threads the bilayer; the sequence is RMYFFIGNLALCDLLAGIAYKVNILMSGK. The Extracellular portion of the chain corresponds to 102–115; it reads KTFSLSPTVWFLRE. A helical transmembrane segment spans residues 116 to 134; the sequence is GSMFVALGASTCSLLAIAI. Topologically, residues 135 to 153 are cytoplasmic; it reads ERHLTMIKMRPYDANKRHR. A helical transmembrane segment spans residues 154–179; it reads VFLLIGMCWLIAFTLGALPILGWNCL. Topologically, residues 180–195 are extracellular; that stretch reads HNLPDCSTILPLYSKK. The chain crosses the membrane as a helical span at residues 196-216; sequence YIAFCISIFTAILVTIVILYA. At 217 to 243 the chain is on the cytoplasmic side; it reads RIYFLVKSSSRKVANHNNSERSMALLR. A helical membrane pass occupies residues 244 to 265; it reads TVVIVVSVFIACWSPLFILFLI. Over 266 to 281 the chain is Extracellular; that stretch reads DVACRVQACPILFKAQ. Residues 282 to 302 traverse the membrane as a helical segment; the sequence is WFIVLAVLNSAMNPVIYTLAS. Residues 303 to 378 are Cytoplasmic-facing; sequence KEMRRAFFRL…AALQNGIFCN (76 aa). S326 bears the Phosphoserine mark. Residues 327-357 form a disordered region; the sequence is PIQPALDPSRSKSSSSNNSSHSPKVKEDLPH. Over residues 337-348 the composition is skewed to low complexity; the sequence is SKSSSSNNSSHS.

This sequence belongs to the G-protein coupled receptor 1 family. In terms of tissue distribution, expressed in all tissues, but most abundantly in heart, placenta, kidney, and liver.

The protein localises to the cell membrane. In terms of biological role, receptor for the lysosphingolipid sphingosine 1-phosphate (S1P). S1P is a bioactive lysophospholipid that elicits diverse physiological effect on most types of cells and tissues. When expressed in rat HTC4 hepatoma cells, is capable of mediating S1P-induced cell proliferation and suppression of apoptosis. This is Sphingosine 1-phosphate receptor 3 from Homo sapiens (Human).